The sequence spans 128 residues: LIM domain-containing protein 2 (128 aa).

Methionine 1 is subject to N-acetylmethionine. The segment at 1-25 (MFQAAGAAQATPSHEAKGSSGSSTV) is disordered. One can recognise an LIM zinc-binding domain in the interval 39–99 (ETCAACQKTV…RPHFQQLFKS (61 aa)). Positions 41, 44, 62, 65, 68, 71, 89, and 92 each coordinate Zn(2+).

In terms of assembly, interacts with ILK.

Its subcellular location is the cytoplasm. The protein localises to the nucleus. In terms of biological role, acts as an activator of the protein-kinase ILK, thereby regulating cell motility. The polypeptide is LIM domain-containing protein 2 (Mus musculus (Mouse)).